Reading from the N-terminus, the 514-residue chain is Cytochrome P450 94A1 (514 aa).

The helical transmembrane segment at 7-29 threads the bilayer; the sequence is EVLLPYLLPLLLLILPTTIFFLT. Cys-458 provides a ligand contact to heme.

Belongs to the cytochrome P450 family. Heme is required as a cofactor.

Its subcellular location is the endoplasmic reticulum membrane. In terms of biological role, catalyzes the omega-hydroxylation of various fatty acids (FA) from 10 to 18 carbon atoms. The substrate specificity is higher for laurate &gt; palmitate &gt; myristate &gt; linolenate &gt; linoleate &gt; oleate &gt; caprate. May play a minor role in cutin synthesis and could be involved in plant defense. This is Cytochrome P450 94A1 (CYP94A1) from Vicia sativa (Spring vetch).